Here is a 149-residue protein sequence, read N- to C-terminus: Small heat shock protein IbpB (149 aa).

A sHSP domain is found at 26 to 137 (SQEPIDFPPY…QPQRIAIGGG (112 aa)).

The protein belongs to the small heat shock protein (HSP20) family. In terms of assembly, homodimer. Forms homomultimers of about 100-150 subunits at optimal growth temperatures. Conformation changes to oligomers at high temperatures or high ionic concentrations. The decrease in size of the multimers is accompanied by an increase in chaperone activity.

It is found in the cytoplasm. Its function is as follows. Associates with aggregated proteins, together with IbpA, to stabilize and protect them from irreversible denaturation and extensive proteolysis during heat shock and oxidative stress. Aggregated proteins bound to the IbpAB complex are more efficiently refolded and reactivated by the ATP-dependent chaperone systems ClpB and DnaK/DnaJ/GrpE. Its activity is ATP-independent. In Pectobacterium carotovorum subsp. carotovorum (strain PC1), this protein is Small heat shock protein IbpB.